The following is a 271-amino-acid chain: Transmembrane protein 150A (271 aa).

Topologically, residues 1–2 are cytoplasmic; sequence MT. Residues 3–23 form a helical membrane-spanning segment; it reads AWILLPVSLSAFSITGIWTVY. At 24–75 the chain is on the extracellular side; sequence AMAVMNRHVCPVENWSYNESCSPDPAEQGGPKSCCTLDDVPLISKCGTYPPE. Asparagine 37 and asparagine 41 each carry an N-linked (GlcNAc...) asparagine glycan. Residues 76–96 form a helical membrane-spanning segment; it reads SCLFSLIGNMGAVMVALICLL. The Cytoplasmic segment spans residues 97 to 108; sequence RYGQLLEQSRHS. The chain crosses the membrane as a helical span at residues 109–129; sequence WINTTALITGCTNAAGLVVVG. At 130–140 the chain is on the extracellular side; that stretch reads NFQVDHAKSLH. Residues 141–161 traverse the membrane as a helical segment; sequence YIGTGVAFTAGLLFVCLHCVL. At 162 to 178 the chain is on the cytoplasmic side; sequence FYHGATTPLDMAMAYLR. A helical transmembrane segment spans residues 179-199; it reads SVLAVIAFITLVLSGVFFLHE. Residues 200-211 are Extracellular-facing; that stretch reads SSQLQHGAALCE. The helical transmembrane segment at 212 to 232 threads the bilayer; sequence WVFVLDILIFYGTFSYEFGTI. Residues 233 to 271 are Cytoplasmic-facing; it reads SSDTLVAALQPAPGRACKSSGSSSTSTHLNCAPESIAMI.

The protein belongs to the DRAM/TMEM150 family. As to quaternary structure, interacts (via C-terminal cytoplasmic tail) with PI4KA.

The protein resides in the cell membrane. In terms of biological role, regulates localization of phosphatidylinositol 4-kinase (PI4K) to the plasma membrane, possibly by reducing the association of TTC7 (TTC7A or TTC7B) with the PI4K complex. Acts as a regulator of phosphatidylinositol 4-phosphate (PtdIns(4)P) synthesis. May also play a role in fasting-induced catabolism. The polypeptide is Transmembrane protein 150A (Tmem150a) (Mus musculus (Mouse)).